The following is a 187-amino-acid chain: Probable DNA endonuclease SmrA (187 aa).

Residues 88 to 169 (LNLLRQPVEE…GSGACYVALR (82 aa)) enclose the Smr domain.

Functionally, has DNA endonuclease activity. Binds DNA. The chain is Probable DNA endonuclease SmrA (smrA) from Escherichia coli (strain K12).